The following is a 325-amino-acid chain: ATP synthase gamma chain (325 aa).

This sequence belongs to the ATPase gamma chain family. As to quaternary structure, F-type ATPases have 2 components, CF(1) - the catalytic core - and CF(0) - the membrane proton channel. CF(1) has five subunits: alpha(3), beta(3), gamma(1), delta(1), epsilon(1). CF(0) has three main subunits: a, b and c.

The protein localises to the cell membrane. Its function is as follows. Produces ATP from ADP in the presence of a proton gradient across the membrane. The gamma chain is believed to be important in regulating ATPase activity and the flow of protons through the CF(0) complex. The polypeptide is ATP synthase gamma chain (Corynebacterium glutamicum (strain ATCC 13032 / DSM 20300 / JCM 1318 / BCRC 11384 / CCUG 27702 / LMG 3730 / NBRC 12168 / NCIMB 10025 / NRRL B-2784 / 534)).